A 197-amino-acid chain; its full sequence is DNA helicase/primase complex protein (197 aa).

Belongs to the herpesviridae UL52 family.

Involved in DNA replication. This Equus caballus (Horse) protein is DNA helicase/primase complex protein (7).